Reading from the N-terminus, the 411-residue chain is Argininosuccinate lyase (411 aa).

It belongs to the lyase 1 family. Argininosuccinate lyase subfamily.

Its subcellular location is the cytoplasm. The enzyme catalyses 2-(N(omega)-L-arginino)succinate = fumarate + L-arginine. Its pathway is amino-acid biosynthesis; L-arginine biosynthesis; L-arginine from L-ornithine and carbamoyl phosphate: step 3/3. The polypeptide is Argininosuccinate lyase (Legionella pneumophila (strain Lens)).